The chain runs to 1059 residues: Carbamoyl phosphate synthase large chain (1059 aa).

The carboxyphosphate synthetic domain stretch occupies residues 1–401 (MPKRKDIQKV…AMLKAVRSLE (401 aa)). Arg-129, Arg-169, Gly-175, Gly-176, Arg-208, Ile-210, Glu-215, Gly-241, Val-242, His-243, Gln-284, and Glu-298 together coordinate ATP. An ATP-grasp 1 domain is found at 133-327 (KALMERLNEP…IAKMAAKIAV (195 aa)). Mg(2+) contacts are provided by Gln-284, Glu-298, and Asn-300. Residues Gln-284, Glu-298, and Asn-300 each contribute to the Mn(2+) site. The segment at 402 to 546 (IGVTGLNDLT…YATYERENES (145 aa)) is oligomerization domain. The segment at 547–929 (VRSKKPSVIV…ALYKAFVASN (383 aa)) is carbamoyl phosphate synthetic domain. The region spanning 671–861 (DQVIKTLALP…LAQLATRVML (191 aa)) is the ATP-grasp 2 domain. 10 residues coordinate ATP: Arg-707, Ser-746, Leu-748, Glu-752, Gly-777, Val-778, His-779, Ser-780, Gln-820, and Glu-832. Positions 820, 832, and 834 each coordinate Mg(2+). Gln-820, Glu-832, and Asn-834 together coordinate Mn(2+). Residues 930 to 1059 (IKVPQYGNVL…SRSFTVNEMK (130 aa)) form the MGS-like domain. An allosteric domain region spans residues 930–1059 (IKVPQYGNVL…SRSFTVNEMK (130 aa)).

It belongs to the CarB family. Composed of two chains; the small (or glutamine) chain promotes the hydrolysis of glutamine to ammonia, which is used by the large (or ammonia) chain to synthesize carbamoyl phosphate. Tetramer of heterodimers (alpha,beta)4. The cofactor is Mg(2+). Mn(2+) is required as a cofactor.

It carries out the reaction hydrogencarbonate + L-glutamine + 2 ATP + H2O = carbamoyl phosphate + L-glutamate + 2 ADP + phosphate + 2 H(+). The enzyme catalyses hydrogencarbonate + NH4(+) + 2 ATP = carbamoyl phosphate + 2 ADP + phosphate + 2 H(+). Its pathway is amino-acid biosynthesis; L-arginine biosynthesis; carbamoyl phosphate from bicarbonate: step 1/1. It functions in the pathway pyrimidine metabolism; UMP biosynthesis via de novo pathway; (S)-dihydroorotate from bicarbonate: step 1/3. In terms of biological role, large subunit of the glutamine-dependent carbamoyl phosphate synthetase (CPSase). CPSase catalyzes the formation of carbamoyl phosphate from the ammonia moiety of glutamine, carbonate, and phosphate donated by ATP, constituting the first step of 2 biosynthetic pathways, one leading to arginine and/or urea and the other to pyrimidine nucleotides. The large subunit (synthetase) binds the substrates ammonia (free or transferred from glutamine from the small subunit), hydrogencarbonate and ATP and carries out an ATP-coupled ligase reaction, activating hydrogencarbonate by forming carboxy phosphate which reacts with ammonia to form carbamoyl phosphate. This is Carbamoyl phosphate synthase large chain from Leuconostoc citreum (strain KM20).